The primary structure comprises 91 residues: Early E3B 10.4 kDa protein (91 aa).

The N-terminal stretch at Met-1 to Ala-22 is a signal peptide. At Ala-23 to Pro-34 the chain is on the lumenal side. Residues Phe-35–Ile-60 form a helical membrane-spanning segment. The Cytoplasmic portion of the chain corresponds to Gln-61–Leu-91.

Belongs to the adenoviridae E3B family.

Its subcellular location is the host endoplasmic reticulum membrane. Its function is as follows. Down-regulates the EGF receptor. This chain is Early E3B 10.4 kDa protein, found in Homo sapiens (Human).